Consider the following 228-residue polypeptide: PKHD-type hydroxylase Rmet_0838 (228 aa).

In terms of domain architecture, Fe2OG dioxygenase spans Arg78–Ser179. Fe cation contacts are provided by His96, Asp98, and His160. Residue Arg170 participates in 2-oxoglutarate binding.

Fe(2+) is required as a cofactor. Requires L-ascorbate as cofactor.

The polypeptide is PKHD-type hydroxylase Rmet_0838 (Cupriavidus metallidurans (strain ATCC 43123 / DSM 2839 / NBRC 102507 / CH34) (Ralstonia metallidurans)).